The following is a 180-amino-acid chain: ATP-dependent protease subunit HslV (180 aa).

Thr-6 is an active-site residue. Positions 162, 165, and 168 each coordinate Na(+).

The protein belongs to the peptidase T1B family. HslV subfamily. In terms of assembly, a double ring-shaped homohexamer of HslV is capped on each side by a ring-shaped HslU homohexamer. The assembly of the HslU/HslV complex is dependent on binding of ATP.

It is found in the cytoplasm. It catalyses the reaction ATP-dependent cleavage of peptide bonds with broad specificity.. Its activity is regulated as follows. Allosterically activated by HslU binding. Protease subunit of a proteasome-like degradation complex believed to be a general protein degrading machinery. This chain is ATP-dependent protease subunit HslV, found in Oleidesulfovibrio alaskensis (strain ATCC BAA-1058 / DSM 17464 / G20) (Desulfovibrio alaskensis).